Reading from the N-terminus, the 162-residue chain is MSSSEVNKVFTEEQEALVVKAWAVMKKNSAELGLQFFLKIFEIAPSAKNLFSYLKDSPVPLEQNPKLKPHATTVFVMTCESAVQLRKAGKATVKESDLKRIGAIHFKTGVVNEHFEVTRFALLETIKEAVPEMWSPEMKNAWGVAYDQLVAAIKFEMKPSST.

An N-acetylserine modification is found at serine 2. A Globin domain is found at 9–158; it reads VFTEEQEALV…LVAAIKFEMK (150 aa). The Homodimerization motif lies at 42 to 46; the sequence is EIAPS. Heme b-binding residues include serine 52, lysine 66, histidine 70, arginine 100, and histidine 105. The short motif at 112–124 is the Homodimerization element; sequence NEHFEVTRFALLE.

This sequence belongs to the plant globin family. In terms of assembly, homodimer with distinct heme coordination in each subunits. Heme b serves as cofactor. As to expression, root nodules.

It localises to the cytoplasm. It is found in the nucleus. The catalysed reaction is Fe(III)-heme b-[protein] + nitric oxide + H2O = Fe(II)-heme b-[protein] + nitrite + 2 H(+). Its function is as follows. Phytoglobin that reduces nitrite to nitric oxide (NO) under anoxic conditions (e.g. during flooding or in waterlogged soil) and upon root nodulation. Required for general plant development and during nodulation, especially for the onset of symbiosis. Monitors nitric oxide (NO) levels during early phase of the nitrogen-fixing symbiosis and buffers oxygen in functioning nodules. May not function as an oxygen storage or transport protein. Has an unusually high affinity for O(2) through a hexacoordinate heme iron because of a very low dissociation constant. The chain is Anaerobic nitrite reductase from Parasponia andersonii (Sponia andersonii).